The following is a 707-amino-acid chain: Polyribonucleotide nucleotidyltransferase (707 aa).

2 residues coordinate Mg(2+): Asp-491 and Asp-497. Residues 558–617 enclose the KH domain; the sequence is PRIEKIKIHPDKIGLLIGPGGKTIKKISAESGAEITIEDDGTVMIYSSSADSLEAAREMI. The region spanning 622 to 695 is the S1 motif domain; the sequence is GEVTVGGIYR…EKGRYKFSRK (74 aa).

It belongs to the polyribonucleotide nucleotidyltransferase family. The cofactor is Mg(2+).

It localises to the cytoplasm. The enzyme catalyses RNA(n+1) + phosphate = RNA(n) + a ribonucleoside 5'-diphosphate. Functionally, involved in mRNA degradation. Catalyzes the phosphorolysis of single-stranded polyribonucleotides processively in the 3'- to 5'-direction. In Methylacidiphilum infernorum (isolate V4) (Methylokorus infernorum (strain V4)), this protein is Polyribonucleotide nucleotidyltransferase.